Here is a 287-residue protein sequence, read N- to C-terminus: Succinate dehydrogenase [ubiquinone] iron-sulfur subunit, mitochondrial (287 aa).

The transit peptide at 1 to 23 (MISNVLKRASVLARSNGIQSAFY) directs the protein to the mitochondrion. Residues 51–140 (FQVYRYNEET…GDTVKVYPLP (90 aa)) enclose the 2Fe-2S ferredoxin-type domain. Residues Cys-101, Cys-106, Cys-109, and Cys-121 each contribute to the [2Fe-2S] cluster site. The region spanning 186–216 (NRHKLDGLYECILCACCSTSCPSYWWSEGGD) is the 4Fe-4S ferredoxin-type domain. [4Fe-4S] cluster contacts are provided by Cys-196, Cys-199, and Cys-202. Residue Cys-206 participates in [3Fe-4S] cluster binding. Trp-211 is an a ubiquinone binding site. 2 residues coordinate [3Fe-4S] cluster: Cys-257 and Cys-263. Cys-267 lines the [4Fe-4S] cluster pocket.

This sequence belongs to the succinate dehydrogenase/fumarate reductase iron-sulfur protein family. Component of complex II composed of four subunits: the flavoprotein (FP) SDHA, iron-sulfur protein (IP) SDHB, and a cytochrome b composed of a large and a small subunit. [2Fe-2S] cluster serves as cofactor. The cofactor is [3Fe-4S] cluster. It depends on [4Fe-4S] cluster as a cofactor.

Its subcellular location is the mitochondrion inner membrane. It carries out the reaction a quinone + succinate = fumarate + a quinol. The protein operates within carbohydrate metabolism; tricarboxylic acid cycle; fumarate from succinate (eukaryal route): step 1/1. In terms of biological role, iron-sulfur protein (IP) subunit of succinate dehydrogenase (SDH) that is involved in complex II of the mitochondrial electron transport chain and is responsible for transferring electrons from succinate to ubiquinone (coenzyme Q). This chain is Succinate dehydrogenase [ubiquinone] iron-sulfur subunit, mitochondrial (sdhB), found in Dictyostelium discoideum (Social amoeba).